Consider the following 352-residue polypeptide: Heat-inducible transcription repressor HrcA (352 aa).

This sequence belongs to the HrcA family.

Functionally, negative regulator of class I heat shock genes (grpE-dnaK-dnaJ and groELS operons). Prevents heat-shock induction of these operons. The polypeptide is Heat-inducible transcription repressor HrcA (Lactobacillus gasseri (strain ATCC 33323 / DSM 20243 / BCRC 14619 / CIP 102991 / JCM 1131 / KCTC 3163 / NCIMB 11718 / NCTC 13722 / AM63)).